The following is a 321-amino-acid chain: L-carnitine dehydrogenase (321 aa).

14–19 (GAGVIG) is a binding site for NAD(+).

The protein belongs to the 3-hydroxyacyl-CoA dehydrogenase family. L-carnitine dehydrogenase subfamily. As to quaternary structure, homodimer.

It is found in the cytoplasm. The catalysed reaction is carnitine + NAD(+) = 3-dehydrocarnitine + NADH + H(+). It participates in amine and polyamine metabolism; carnitine metabolism. Catalyzes the NAD(+)-dependent oxidation of L-carnitine to 3-dehydrocarnitine. In Burkholderia mallei (strain ATCC 23344), this protein is L-carnitine dehydrogenase.